A 333-amino-acid chain; its full sequence is Squamosa promoter-binding-like protein 8 (333 aa).

Positions 1 to 28 are disordered; it reads MLDYEWDNPSSIVLSGDERNPDSDPTRS. Residues 16 to 25 show a composition bias toward basic and acidic residues; that stretch reads GDERNPDSDP. Residues 179-269 form a sufficient and necessary for DNA binding region; it reads MANSLSTPRC…RKCHQSASAT (91 aa). The SBP-type zinc finger occupies 185-262; sequence TPRCQAEGCN…ADHNRRRRKC (78 aa). Positions 188, 193, 210, 213, 229, 232, 236, and 248 each coordinate Zn(2+). Residues 245-261 carry the Bipartite nuclear localization signal motif; that stretch reads KRSCRKRLADHNRRRRK. Disordered stretches follow at residues 254–303 and 314–333; these read DHNR…TISL and TASS…FSSG. The segment covering 264–284 has biased composition (polar residues); that stretch reads QSASATQDTGTGKTTPKSPND. A compositionally biased stretch (low complexity) spans 289–299; the sequence is ASSSPSSNAPP.

The cofactor is Zn(2+). Expressed in shoot apical region and early floral tissues. Transcripts levels increase in developing pollen sacs, and decrease in later stage of anther development. Strongly expressed in the placental region of the carpels.

The protein resides in the nucleus. It is found in the cytoplasm. Its function is as follows. Trans-acting factor that binds specifically to the consensus nucleotide sequence 5'-TNCGTACAA-3'. Binds specifically to the 5'-GTAC-3' core sequence. Involved in development and floral organogenesis. Required for ovule differentiation, pollen production, filament elongation, seed formation and siliques elongation. Also seems to play a role in the formation of trichomes on sepals. May positively modulate gibberellin (GA) signaling in flower. The chain is Squamosa promoter-binding-like protein 8 (SPL8) from Arabidopsis thaliana (Mouse-ear cress).